A 198-amino-acid polypeptide reads, in one-letter code: uncharacterized protein (198 aa).

Residues glutamate 11–arginine 71 form the HTH tetR-type domain. Residues threonine 34–tryptophan 53 constitute a DNA-binding region (H-T-H motif).

This is an uncharacterized protein from Bacillus subtilis (strain 168).